Here is a 167-residue protein sequence, read N- to C-terminus: Methylated-DNA--protein-cysteine methyltransferase (167 aa).

The Nucleophile; methyl group acceptor role is filled by Cys-128.

This sequence belongs to the MGMT family.

It is found in the cytoplasm. The enzyme catalyses a 6-O-methyl-2'-deoxyguanosine in DNA + L-cysteinyl-[protein] = S-methyl-L-cysteinyl-[protein] + a 2'-deoxyguanosine in DNA. It catalyses the reaction a 4-O-methyl-thymidine in DNA + L-cysteinyl-[protein] = a thymidine in DNA + S-methyl-L-cysteinyl-[protein]. In terms of biological role, involved in the cellular defense against the biological effects of O6-methylguanine (O6-MeG) and O4-methylthymine (O4-MeT) in DNA. Repairs the methylated nucleobase in DNA by stoichiometrically transferring the methyl group to a cysteine residue in the enzyme. This is a suicide reaction: the enzyme is irreversibly inactivated. This chain is Methylated-DNA--protein-cysteine methyltransferase, found in Methanocaldococcus jannaschii (strain ATCC 43067 / DSM 2661 / JAL-1 / JCM 10045 / NBRC 100440) (Methanococcus jannaschii).